The following is a 181-amino-acid chain: Large ribosomal subunit protein uL6 (181 aa).

The protein belongs to the universal ribosomal protein uL6 family. As to quaternary structure, part of the 50S ribosomal subunit.

Functionally, this protein binds to the 23S rRNA, and is important in its secondary structure. It is located near the subunit interface in the base of the L7/L12 stalk, and near the tRNA binding site of the peptidyltransferase center. The protein is Large ribosomal subunit protein uL6 of Ruthia magnifica subsp. Calyptogena magnifica.